We begin with the raw amino-acid sequence, 126 residues long: Aspartate 1-decarboxylase (126 aa).

Residue Ser25 is the Schiff-base intermediate with substrate; via pyruvic acid of the active site. Residue Ser25 is modified to Pyruvic acid (Ser). Substrate is bound at residue Thr57. Tyr58 functions as the Proton donor in the catalytic mechanism. A substrate-binding site is contributed by 73 to 75 (GAA).

The protein belongs to the PanD family. Heterooctamer of four alpha and four beta subunits. It depends on pyruvate as a cofactor. Post-translationally, is synthesized initially as an inactive proenzyme, which is activated by self-cleavage at a specific serine bond to produce a beta-subunit with a hydroxyl group at its C-terminus and an alpha-subunit with a pyruvoyl group at its N-terminus.

The protein resides in the cytoplasm. The catalysed reaction is L-aspartate + H(+) = beta-alanine + CO2. It participates in cofactor biosynthesis; (R)-pantothenate biosynthesis; beta-alanine from L-aspartate: step 1/1. In terms of biological role, catalyzes the pyruvoyl-dependent decarboxylation of aspartate to produce beta-alanine. This Sodalis glossinidius (strain morsitans) protein is Aspartate 1-decarboxylase.